The chain runs to 153 residues: MVATKTFALLLLSLFLAVGLGEKKEGHFSALPSLPVGSHAKVSSPQPRGPRYAEGTFISDYSIAMDKIHQQDFVNWLLAQKGKKNDWKHNITQREARALELASQANRKEEEAVEPQSSPAKNPSDEDLLRDLLIQELLACLLDQTNLCRLRSR.

An N-terminal signal peptide occupies residues 1 to 21 (MVATKTFALLLLSLFLAVGLG). 2 consecutive propeptides follow at residues 22–50 (EKKEGHFSALPSLPVGSHAKVSSPQPRGP) and 95–153 (EARA…LRSR). Residues 102–125 (ASQANRKEEEAVEPQSSPAKNPSD) are disordered.

Belongs to the glucagon family.

It is found in the secreted. Its function is as follows. Potent stimulator of insulin secretion and relatively poor inhibitor of gastric acid secretion. This chain is Gastric inhibitory polypeptide (GIP), found in Homo sapiens (Human).